The chain runs to 70 residues: Melittin-N (70 aa).

A signal peptide spans 1–21 (MKFLVNVALVFMVVYISYIYA). The propeptide at 22 to 43 (APEPEPAPEPEAEADAEADPEA) is removed by a dipeptidylpeptidase. The residue at position 44 (G44) is an N-formylglycine; partial. Q69 is subject to Glutamine amide.

It belongs to the melittin family. As to quaternary structure, monomer (in solution and for integration into membranes), homotetramer (in solution and potentially as a toroidal pore in membranes), and potenially homomultimer (as a toroidal pore in membranes). As to expression, expressed by the venom gland.

The protein localises to the secreted. It localises to the target cell membrane. Main toxin of bee venom with strong hemolytic activity and antimicrobial activity. It has enhancing effects on bee venom phospholipase A2 activity. This amphipathic toxin binds to negatively charged membrane surface and forms pore by inserting into lipid bilayers inducing the leakage of ions and molecules and the enhancement of permeability that ultimately leads to cell lysis. It acts as a voltage-gated pore with higher selectivity for anions over cations. The ion conductance has been shown to be voltage-dependent. Self-association of melittin in membranes is promoted by high ionic strength, but not by the presence of negatively charged lipids. In vivo, intradermal injection into healthy human volunteers produce sharp pain sensation and an inflammatory response. It produces pain by activating primary nociceptor cells directly and indirectly due to its ability to activate plasma membrane phospholipase A2 and its pore-forming activity. Shows lower cytotoxicity when tested on E.coli and cancer cell lines than melittin, as well as lower anti-inflammatory properties and lower properties to interact to small unilamellar liposomes. This chain is Melittin-N (MELT), found in Apis cerana (Indian honeybee).